Reading from the N-terminus, the 197-residue chain is Putative protein N5-glutamine methyltransferase MJ0928 (197 aa).

S-adenosyl-L-methionine-binding positions include G42–G46, D64, and N105. N105–Y108 lines the substrate pocket.

It belongs to the eukaryotic/archaeal PrmC-related family.

The enzyme catalyses L-glutaminyl-[protein] + S-adenosyl-L-methionine = N(5)-methyl-L-glutaminyl-[protein] + S-adenosyl-L-homocysteine + H(+). Functionally, putative protein methyltransferase using S-adenosyl-L-methionine as the methyl donor. May methylate a Gln residue in target proteins. In Methanocaldococcus jannaschii (strain ATCC 43067 / DSM 2661 / JAL-1 / JCM 10045 / NBRC 100440) (Methanococcus jannaschii), this protein is Putative protein N5-glutamine methyltransferase MJ0928.